The following is a 198-amino-acid chain: CASP-like protein 1U1 (198 aa).

The Cytoplasmic segment spans residues 1–30 (MSDTPVVVIPRKGYVDGHHGYHHSYHSGLN). The helical transmembrane segment at 31–51 (LLLRLLQAFATAAAVIVMLLA) threads the bilayer. The Extracellular portion of the chain corresponds to 52 to 73 (TQTEFTRYGEVRGRWRDYPAYK). Residues 74–94 (WFIIANAVVFVYALLATLVAC) form a helical membrane-spanning segment. The Cytoplasmic portion of the chain corresponds to 95–117 (CALIARRGPLSYSPSAWLTFLLD). The helical transmembrane segment at 118-138 (FVAASALMSAASAALAVALIA) threads the bilayer. Topologically, residues 139–165 (RNGQNLQGQHYWPTFCNYVTRFCDYAQ) are extracellular. The chain crosses the membrane as a helical span at residues 166–186 (GAIIASFCGFGLLALSTLLAA). Over 187–198 (SALHHLAWHRLH) the chain is Cytoplasmic.

Belongs to the Casparian strip membrane proteins (CASP) family. Homodimer and heterodimers.

The protein localises to the cell membrane. The polypeptide is CASP-like protein 1U1 (Physcomitrium patens (Spreading-leaved earth moss)).